The sequence spans 218 residues: Large ribosomal subunit protein uL16 (218 aa).

Belongs to the universal ribosomal protein uL16 family. In terms of assembly, component of the large ribosomal subunit. Mature ribosomes consist of a small (40S) and a large (60S) subunit. The 40S subunit contains about 33 different proteins and 1 molecule of RNA (18S). The 60S subunit contains about 49 different proteins and 3 molecules of RNA (28S, 5.8S and 5S).

This Drosophila melanogaster (Fruit fly) protein is Large ribosomal subunit protein uL16 (RpL10).